We begin with the raw amino-acid sequence, 594 residues long: F-box/LRR-repeat protein At3g58980 (594 aa).

The 49-residue stretch at 1–49 (MDRISNLPNEIICHIVSFLSAKEAAFASILSKRWRNLFTIVIKLQFDDS) folds into the F-box domain. LRR repeat units lie at residues 103 to 125 (ILDLKLDICAGRRYSLPLEVFTC), 128 to 151 (LVKLELGSDFGGFVVDLVPEDAFL), 152 to 174 (PALETLLLNYIRFKDLRRCAFEK), 203 to 218 (SPTLERLTISHVDLYE), 219 to 242 (CEFTRINLDTPNLTYLELSDAVPD), 249 to 272 (LDSLVEVKLDLTLMVDHKYHGYVD), 288 to 314 (LRNVEIMNLQSPNTFQAFSYFHEAIPV), 315 to 339 (FKNLYHLTITNNDTVIGFCWEFLPF), 344 to 369 (CPNLKTLVIDGPLHYNEDRPKSVCHC), 403 to 414 (LEKLSGLKLVKL), 415 to 437 (HSLTRFGSDKKKLLMLPRASSKC), 450 to 474 (LPSLKTLILDSVKFYDRCGCCAFQK), 503 to 518 (SQTLERLTIDHRYWAE), 519 to 541 (HNLESFTFDTPSLTYLDYNAHVP), and 584 to 594 (LRNVEILRLWM).

This Arabidopsis thaliana (Mouse-ear cress) protein is F-box/LRR-repeat protein At3g58980.